The sequence spans 20 residues: Ribosome-inactivating protein (20 aa).

A disordered region spans residues 1 to 20 (NVRFDLSGATSSSYKTFIKN). The segment covering 8-20 (GATSSSYKTFIKN) has biased composition (polar residues).

It belongs to the ribosome-inactivating protein family. Type 1 RIP subfamily.

It carries out the reaction Endohydrolysis of the N-glycosidic bond at one specific adenosine on the 28S rRNA.. The sequence is that of Ribosome-inactivating protein from Cucurbita pepo (Vegetable marrow).